The following is a 62-amino-acid chain: MAKECVITGRKSRSGNKRSHAMNSSKRTWKANLQKVRILVNGKPKKVWVSARALKSGKVERV.

The disordered stretch occupies residues 1 to 27; it reads MAKECVITGRKSRSGNKRSHAMNSSKR. A compositionally biased stretch (basic residues) spans 10-20; sequence RKSRSGNKRSH.

This sequence belongs to the bacterial ribosomal protein bL28 family.

The chain is Large ribosomal subunit protein bL28 from Listeria innocua serovar 6a (strain ATCC BAA-680 / CLIP 11262).